Consider the following 549-residue polypeptide: Chaperonin GroEL (549 aa).

Residues 30–33, Lys51, 87–91, Gly415, and Asp495 each bind ATP; these read TLGP and DGTTT.

Belongs to the chaperonin (HSP60) family. In terms of assembly, forms a cylinder of 14 subunits composed of two heptameric rings stacked back-to-back. Interacts with the co-chaperonin GroES.

The protein localises to the cytoplasm. It carries out the reaction ATP + H2O + a folded polypeptide = ADP + phosphate + an unfolded polypeptide.. Functionally, together with its co-chaperonin GroES, plays an essential role in assisting protein folding. The GroEL-GroES system forms a nano-cage that allows encapsulation of the non-native substrate proteins and provides a physical environment optimized to promote and accelerate protein folding. In Colwellia maris, this protein is Chaperonin GroEL.